The following is a 204-amino-acid chain: Small ribosomal subunit protein uS4 (204 aa).

The interval 1 to 46 (MSKRHSSKYKIDRRMGENIWGRPKSPVNRREYGPGQHGQRRRSKIS) is disordered. Residues 94 to 157 (RRLDMIVYRA…QEMALVLEAQ (64 aa)) enclose the S4 RNA-binding domain.

The protein belongs to the universal ribosomal protein uS4 family. In terms of assembly, part of the 30S ribosomal subunit. Contacts protein S5. The interaction surface between S4 and S5 is involved in control of translational fidelity.

Its function is as follows. One of the primary rRNA binding proteins, it binds directly to 16S rRNA where it nucleates assembly of the body of the 30S subunit. With S5 and S12 plays an important role in translational accuracy. The chain is Small ribosomal subunit protein uS4 from Zymomonas mobilis subsp. mobilis (strain ATCC 31821 / ZM4 / CP4).